We begin with the raw amino-acid sequence, 108 residues long: Putative pterin-4-alpha-carbinolamine dehydratase (108 aa).

It belongs to the pterin-4-alpha-carbinolamine dehydratase family.

The enzyme catalyses (4aS,6R)-4a-hydroxy-L-erythro-5,6,7,8-tetrahydrobiopterin = (6R)-L-erythro-6,7-dihydrobiopterin + H2O. The polypeptide is Putative pterin-4-alpha-carbinolamine dehydratase (Bordetella avium (strain 197N)).